A 192-amino-acid chain; its full sequence is Nucleoside triphosphate pyrophosphatase (192 aa).

Aspartate 73 (proton acceptor) is an active-site residue.

The protein belongs to the Maf family. A divalent metal cation is required as a cofactor.

The protein localises to the cytoplasm. The catalysed reaction is a ribonucleoside 5'-triphosphate + H2O = a ribonucleoside 5'-phosphate + diphosphate + H(+). It catalyses the reaction a 2'-deoxyribonucleoside 5'-triphosphate + H2O = a 2'-deoxyribonucleoside 5'-phosphate + diphosphate + H(+). Nucleoside triphosphate pyrophosphatase. May have a dual role in cell division arrest and in preventing the incorporation of modified nucleotides into cellular nucleic acids. The polypeptide is Nucleoside triphosphate pyrophosphatase (Ehrlichia ruminantium (strain Gardel)).